Consider the following 595-residue polypeptide: P2X purinoceptor 7 (595 aa).

The Cytoplasmic portion of the chain corresponds to 1 to 22 (MPACCSWNDVFQYETNKVTRIQ). The S-palmitoyl cysteine moiety is linked to residue cysteine 4. Residues 23–46 (SVNYGTIKWILHMTVFSYVSFALM) form a helical membrane-spanning segment. The Extracellular portion of the chain corresponds to 47 to 328 (SDKLYQRKEP…ILVFGTGGKF (282 aa)). Asparagine 74 carries N-linked (GlcNAc...) asparagine glycosylation. 3 disulfides stabilise this stretch: cysteine 119–cysteine 168, cysteine 129–cysteine 152, and cysteine 135–cysteine 162. Residue arginine 125 is modified to ADP-ribosylarginine. N-linked (GlcNAc...) asparagine glycosylation occurs at asparagine 187. Threonine 189 serves as a coordination point for ATP. N-linked (GlcNAc...) asparagine glycans are attached at residues asparagine 202 and asparagine 213. Residues cysteine 216 and cysteine 226 are joined by a disulfide bond. Asparagine 241 carries N-linked (GlcNAc...) asparagine glycosylation. Residues cysteine 260 and cysteine 269 are joined by a disulfide bond. Asparagine 284 carries an N-linked (GlcNAc...) asparagine glycan. Residues arginine 294 and lysine 311 each contribute to the ATP site. The helical transmembrane segment at 329-353 (DIIQLVVYIGSTLSYFGLATVCIDL) threads the bilayer. Residue serine 342 participates in Na(+) binding. The Cytoplasmic segment spans residues 354-595 (IINTYASTCC…GQYSGFKYPY (242 aa)). The interval 360–377 (STCCRSRVYPSCKCCEPC) is C-cys anchor. 4 S-palmitoyl cysteine lipidation sites follow: cysteine 362, cysteine 363, cysteine 374, and cysteine 377. A cytoplasmic ballast region spans residues 395–595 (KPTLKYVSFV…GQYSGFKYPY (201 aa)). Residues cysteine 479, cysteine 499, and cysteine 506 each coordinate Zn(2+). Arginine 546, histidine 547, tyrosine 550, and alanine 567 together coordinate GTP. Cysteine 572 is a Zn(2+) binding site. Residues lysine 583, serine 589, and glycine 590 each coordinate GTP.

This sequence belongs to the P2X receptor family. As to quaternary structure, homotrimer. Interacts with LAMA3, ITGB2, ACTB, ACTN4, SVIL, MPP3, HSPA1, HSPCB, HSPA8, PIK230 and PTPRB. Interacts (via C-terminus) with EMP2. Phosphorylation results in its inactivation. In terms of processing, ADP-ribosylation at Arg-125 is necessary and sufficient to activate P2RX7 and gate the channel. Post-translationally, palmitoylation of several cysteines in the C-terminal cytoplasmic tail is required for efficient localization to cell surface. Palmitoylation prevents channel desensitization by physically anchoring the palmitoylated groups to the membrane.

The protein localises to the cell membrane. The catalysed reaction is Ca(2+)(in) = Ca(2+)(out). It carries out the reaction K(+)(in) = K(+)(out). The enzyme catalyses Na(+)(in) = Na(+)(out). Activated by high extracellular ATP levels (0.1-2.5 mM). The synthetic analog 2'(3')-O-(4-benzoylbenzoyl)ATP (BzATP) acts as a potent agonist. Does not undergo desensitization, instead, undergoes a facilitation process where currents progressively increase with repetitive or prolonged agonist application. Palmitoylation prevents channel desensitization. The permeability of the P2RX7 channel is modulated by the amount of cholesterol in the plasma membrane. ATP-gated nonselective transmembrane cation channel that requires high millimolar concentrations of ATP for activation. Upon ATP binding, it rapidly opens to allow the influx of small cations Na(+) and Ca(2+), and the K(+) efflux. Also has the ability to form a large pore in the cell membrane, allowing the passage of large cationic molecules. In microglia, may mediate the transmembrane transport of exogenous NADPH. In immune cells, P2RX7 acts as a molecular sensor in pathological inflammatory states by detecting and responding to high local concentrations of extracellar ATP. In microglial cells, P2RX7 activation leads to the release of pro-inflammatory cytokines, such as IL-1beta and IL-18, through the activation of the NLRP3 inflammasome and caspase-1. Cooperates with KCNK6 to activate NLRP3 inflammasome. Activates death pathways leading to apoptosis and autophagy. Activates death pathways leading to pyroptosis. In terms of biological role, has a higher affinity for ATP, slower deactivation and an increased propensity to form large cation-permeable pores. This Rattus norvegicus (Rat) protein is P2X purinoceptor 7 (P2rx7).